Here is a 454-residue protein sequence, read N- to C-terminus: Bifunctional protein GlmU (454 aa).

Residues 1-229 (MQRYAVVLAA…FDEIMGVNDR (229 aa)) are pyrophosphorylase. UDP-N-acetyl-alpha-D-glucosamine contacts are provided by residues 8–11 (LAAG), lysine 22, glutamine 72, and 77–78 (GT). A Mg(2+)-binding site is contributed by aspartate 102. UDP-N-acetyl-alpha-D-glucosamine is bound by residues glycine 139, glutamate 154, and asparagine 227. Asparagine 227 is a Mg(2+) binding site. The segment at 230 to 250 (VALSKAEQAMRQRINEYHMRN) is linker. The interval 251–454 (GVTLIDPSST…KPGYLNKNKE (204 aa)) is N-acetyltransferase. 2 residues coordinate UDP-N-acetyl-alpha-D-glucosamine: arginine 332 and lysine 350. Catalysis depends on histidine 362, which acts as the Proton acceptor. 2 residues coordinate UDP-N-acetyl-alpha-D-glucosamine: tyrosine 365 and asparagine 376. Acetyl-CoA-binding positions include 385-386 (NY), alanine 422, and arginine 439.

This sequence in the N-terminal section; belongs to the N-acetylglucosamine-1-phosphate uridyltransferase family. The protein in the C-terminal section; belongs to the transferase hexapeptide repeat family. As to quaternary structure, homotrimer. The cofactor is Mg(2+).

The protein resides in the cytoplasm. It carries out the reaction alpha-D-glucosamine 1-phosphate + acetyl-CoA = N-acetyl-alpha-D-glucosamine 1-phosphate + CoA + H(+). It catalyses the reaction N-acetyl-alpha-D-glucosamine 1-phosphate + UTP + H(+) = UDP-N-acetyl-alpha-D-glucosamine + diphosphate. Its pathway is nucleotide-sugar biosynthesis; UDP-N-acetyl-alpha-D-glucosamine biosynthesis; N-acetyl-alpha-D-glucosamine 1-phosphate from alpha-D-glucosamine 6-phosphate (route II): step 2/2. The protein operates within nucleotide-sugar biosynthesis; UDP-N-acetyl-alpha-D-glucosamine biosynthesis; UDP-N-acetyl-alpha-D-glucosamine from N-acetyl-alpha-D-glucosamine 1-phosphate: step 1/1. It participates in bacterial outer membrane biogenesis; LPS lipid A biosynthesis. Functionally, catalyzes the last two sequential reactions in the de novo biosynthetic pathway for UDP-N-acetylglucosamine (UDP-GlcNAc). The C-terminal domain catalyzes the transfer of acetyl group from acetyl coenzyme A to glucosamine-1-phosphate (GlcN-1-P) to produce N-acetylglucosamine-1-phosphate (GlcNAc-1-P), which is converted into UDP-GlcNAc by the transfer of uridine 5-monophosphate (from uridine 5-triphosphate), a reaction catalyzed by the N-terminal domain. This chain is Bifunctional protein GlmU, found in Staphylococcus carnosus (strain TM300).